The primary structure comprises 79 residues: MLSKQKIERINELAKRAKTTGLTEDELREQKKLREEYIQQFRQSFKNQLHSVTVVDGAGNDVTPDKLKQSKNKYRNDIH.

Residues 57–79 (GAGNDVTPDKLKQSKNKYRNDIH) are disordered. The segment covering 63 to 79 (TPDKLKQSKNKYRNDIH) has biased composition (basic and acidic residues).

The protein belongs to the UPF0291 family.

Its subcellular location is the cytoplasm. The chain is UPF0291 protein BH2353 from Halalkalibacterium halodurans (strain ATCC BAA-125 / DSM 18197 / FERM 7344 / JCM 9153 / C-125) (Bacillus halodurans).